Reading from the N-terminus, the 68-residue chain is DNA gyrase inhibitor YacG (68 aa).

Cys-12, Cys-15, Cys-30, and Cys-34 together coordinate Zn(2+). The segment at 48–68 (KLKTQDAPTSGKGQHSDDYED) is disordered.

It belongs to the DNA gyrase inhibitor YacG family. In terms of assembly, interacts with GyrB. Zn(2+) serves as cofactor.

In terms of biological role, inhibits all the catalytic activities of DNA gyrase by preventing its interaction with DNA. Acts by binding directly to the C-terminal domain of GyrB, which probably disrupts DNA binding by the gyrase. The chain is DNA gyrase inhibitor YacG from Acinetobacter baylyi (strain ATCC 33305 / BD413 / ADP1).